A 222-amino-acid polypeptide reads, in one-letter code: Thymidylate kinase (222 aa).

An ATP-binding site is contributed by 10-17; it reads GLEGAGKS.

The protein belongs to the thymidylate kinase family.

The catalysed reaction is dTMP + ATP = dTDP + ADP. Functionally, phosphorylation of dTMP to form dTDP in both de novo and salvage pathways of dTTP synthesis. The polypeptide is Thymidylate kinase (Alteromonas mediterranea (strain DSM 17117 / CIP 110805 / LMG 28347 / Deep ecotype)).